The following is a 314-amino-acid chain: tRNA pseudouridine synthase B (314 aa).

A substrate-binding site is contributed by H43. D48 acts as the Nucleophile in catalysis. Substrate-binding residues include Y76, Y179, and L200.

Belongs to the pseudouridine synthase TruB family. Type 1 subfamily.

It carries out the reaction uridine(55) in tRNA = pseudouridine(55) in tRNA. In terms of biological role, responsible for synthesis of pseudouridine from uracil-55 in the psi GC loop of transfer RNAs. The chain is tRNA pseudouridine synthase B from Serratia proteamaculans (strain 568).